Consider the following 264-residue polypeptide: Tryptophan synthase alpha chain (264 aa).

Residues Glu-49 and Asp-60 each act as proton acceptor in the active site.

The protein belongs to the TrpA family. As to quaternary structure, tetramer of two alpha and two beta chains.

It catalyses the reaction (1S,2R)-1-C-(indol-3-yl)glycerol 3-phosphate + L-serine = D-glyceraldehyde 3-phosphate + L-tryptophan + H2O. It participates in amino-acid biosynthesis; L-tryptophan biosynthesis; L-tryptophan from chorismate: step 5/5. Its function is as follows. The alpha subunit is responsible for the aldol cleavage of indoleglycerol phosphate to indole and glyceraldehyde 3-phosphate. The chain is Tryptophan synthase alpha chain from Laribacter hongkongensis (strain HLHK9).